Here is a 560-residue protein sequence, read N- to C-terminus: Putative ABC transporter ATP-binding protein SP_0483 (560 aa).

2 consecutive ABC transporter domains span residues 6-247 and 297-528; these read IEWK…GIRE and FRLE…ANLK. Residues 40–47 and 329–336 each bind ATP; these read GPSGSGKS and GKNGAGKS.

Belongs to the ABC transporter superfamily.

The protein resides in the cell membrane. Functionally, probably part of an ABC transporter complex. Responsible for energy coupling to the transport system. The sequence is that of Putative ABC transporter ATP-binding protein SP_0483 from Streptococcus pneumoniae serotype 4 (strain ATCC BAA-334 / TIGR4).